A 120-amino-acid chain; its full sequence is Cell cycle protein GpsB (120 aa).

The stretch at 32-68 (LDDIIKDYETYAALVKELREENRRLKEELAAKPVEKA) forms a coiled coil. Residues 63–88 (KPVEKAPVQPTQPVQSTQATQSTVES) form a disordered region. Residues 68–86 (APVQPTQPVQSTQATQSTV) are compositionally biased toward low complexity.

This sequence belongs to the GpsB family. In terms of assembly, forms polymers through the coiled coil domains. Interacts with PBP1, MreC and EzrA.

It is found in the cytoplasm. Its function is as follows. Divisome component that associates with the complex late in its assembly, after the Z-ring is formed, and is dependent on DivIC and PBP2B for its recruitment to the divisome. Together with EzrA, is a key component of the system that regulates PBP1 localization during cell cycle progression. Its main role could be the removal of PBP1 from the cell pole after pole maturation is completed. Also contributes to the recruitment of PBP1 to the division complex. Not essential for septum formation. This is Cell cycle protein GpsB from Streptococcus sanguinis (strain SK36).